Consider the following 141-residue polypeptide: Nucleoside diphosphate kinase (141 aa).

ATP-binding residues include Lys-11, Phe-59, Arg-87, Thr-93, Arg-104, and Asn-114. Residue His-117 is the Pros-phosphohistidine intermediate of the active site.

This sequence belongs to the NDK family. In terms of assembly, homotetramer. Mg(2+) is required as a cofactor.

Its subcellular location is the cytoplasm. It carries out the reaction a 2'-deoxyribonucleoside 5'-diphosphate + ATP = a 2'-deoxyribonucleoside 5'-triphosphate + ADP. The enzyme catalyses a ribonucleoside 5'-diphosphate + ATP = a ribonucleoside 5'-triphosphate + ADP. In terms of biological role, major role in the synthesis of nucleoside triphosphates other than ATP. The ATP gamma phosphate is transferred to the NDP beta phosphate via a ping-pong mechanism, using a phosphorylated active-site intermediate. The chain is Nucleoside diphosphate kinase from Polynucleobacter asymbioticus (strain DSM 18221 / CIP 109841 / QLW-P1DMWA-1) (Polynucleobacter necessarius subsp. asymbioticus).